The primary structure comprises 273 residues: Undecaprenyl-diphosphatase (273 aa).

7 consecutive transmembrane segments (helical) span residues 6–26 (SLLIAAILGVVEGLTEFLPVS), 45–65 (AKTFEVVIQLGSILAVVVMFW), 90–110 (LTLIHILLGMIPAVVLGLLFH), 116–136 (LFNPINVMYALVVGGLLLIAA), 190–210 (YAASEFSFLLAVPMMMGATAL), 222–242 (GDIPMFAVGFITAFVVALIAI), and 252–272 (ISFIPFAIYRFIVAAAVYVVF).

Belongs to the UppP family.

The protein resides in the cell inner membrane. The enzyme catalyses di-trans,octa-cis-undecaprenyl diphosphate + H2O = di-trans,octa-cis-undecaprenyl phosphate + phosphate + H(+). Catalyzes the dephosphorylation of undecaprenyl diphosphate (UPP). Confers resistance to bacitracin. In Escherichia coli O127:H6 (strain E2348/69 / EPEC), this protein is Undecaprenyl-diphosphatase.